Reading from the N-terminus, the 429-residue chain is UPF0053 protein YugS (429 aa).

The next 4 helical transmembrane spans lie at 1–21 (MLIL…VFVA), 61–81 (ACQL…EPTF), 101–121 (IVTF…MGEL), and 133–153 (AVSL…YPFI). The 201-residue stretch at 1–201 (MLILQLIAIF…YEKGEINQSE (201 aa)) folds into the CNNM transmembrane domain. CBS domains lie at 220–281 (MIPR…PIKL) and 284–341 (IMRP…IRDE).

This sequence belongs to the UPF0053 family.

It localises to the cell membrane. The sequence is that of UPF0053 protein YugS (yugS) from Bacillus subtilis (strain 168).